Reading from the N-terminus, the 598-residue chain is Aspartate--tRNA(Asp/Asn) ligase (598 aa).

Residue glutamate 182 coordinates L-aspartate. The interval 206–209 (QIFK) is aspartate. Arginine 228 contacts L-aspartate. ATP is bound by residues 228–230 (RDE) and glutamine 237. Histidine 456 is an L-aspartate binding site. Residue glutamate 490 participates in ATP binding. Arginine 497 lines the L-aspartate pocket. 542–545 (GLDR) contributes to the ATP binding site.

It belongs to the class-II aminoacyl-tRNA synthetase family. Type 1 subfamily. Homodimer.

Its subcellular location is the cytoplasm. It catalyses the reaction tRNA(Asx) + L-aspartate + ATP = L-aspartyl-tRNA(Asx) + AMP + diphosphate. Functionally, aspartyl-tRNA synthetase with relaxed tRNA specificity since it is able to aspartylate not only its cognate tRNA(Asp) but also tRNA(Asn). Reaction proceeds in two steps: L-aspartate is first activated by ATP to form Asp-AMP and then transferred to the acceptor end of tRNA(Asp/Asn). This chain is Aspartate--tRNA(Asp/Asn) ligase, found in Lachnoclostridium phytofermentans (strain ATCC 700394 / DSM 18823 / ISDg) (Clostridium phytofermentans).